The primary structure comprises 105 residues: Large ribosomal subunit protein uL24 (105 aa).

The protein belongs to the universal ribosomal protein uL24 family. Part of the 50S ribosomal subunit.

Its function is as follows. One of two assembly initiator proteins, it binds directly to the 5'-end of the 23S rRNA, where it nucleates assembly of the 50S subunit. One of the proteins that surrounds the polypeptide exit tunnel on the outside of the subunit. The chain is Large ribosomal subunit protein uL24 from Dictyoglomus thermophilum (strain ATCC 35947 / DSM 3960 / H-6-12).